A 490-amino-acid chain; its full sequence is GTPase Der (490 aa).

EngA-type G domains lie at 3 to 166 and 203 to 376; these read PVVA…MDDV and IKLA…DSST. Residues 9–16, 56–60, 118–121, 209–216, 256–260, and 321–324 each bind GTP; these read GRPNVGKS, DTGGI, NKTD, DTAGV, and NKWD. The region spanning 377–461 is the KH-like domain; the sequence is RRVSTAMLTR…PIRIQFKEGE (85 aa).

Belongs to the TRAFAC class TrmE-Era-EngA-EngB-Septin-like GTPase superfamily. EngA (Der) GTPase family. Associates with the 50S ribosomal subunit.

Functionally, GTPase that plays an essential role in the late steps of ribosome biogenesis. In Salmonella newport (strain SL254), this protein is GTPase Der.